The chain runs to 309 residues: Putative HTH-type transcriptional regulatory protein AF_1787 (309 aa).

In terms of domain architecture, HTH cro/C1-type spans isoleucine 131–isoleucine 185. The H-T-H motif DNA-binding region spans valine 142–glutamate 161.

This Archaeoglobus fulgidus (strain ATCC 49558 / DSM 4304 / JCM 9628 / NBRC 100126 / VC-16) protein is Putative HTH-type transcriptional regulatory protein AF_1787.